We begin with the raw amino-acid sequence, 128 residues long: Large ribosomal subunit protein bL12 (128 aa).

The protein belongs to the bacterial ribosomal protein bL12 family. Homodimer. Part of the ribosomal stalk of the 50S ribosomal subunit. Forms a multimeric L10(L12)X complex, where L10 forms an elongated spine to which 2 to 4 L12 dimers bind in a sequential fashion. Binds GTP-bound translation factors.

Functionally, forms part of the ribosomal stalk which helps the ribosome interact with GTP-bound translation factors. Is thus essential for accurate translation. This chain is Large ribosomal subunit protein bL12, found in Desulfovibrio desulfuricans (strain ATCC 27774 / DSM 6949 / MB).